The primary structure comprises 86 residues: Serine protease inhibitor Kazal-type 2 (86 aa).

The N-terminal stretch at 1-16 (MLRLVLLLLVTDFAAS) is a signal peptide. In terms of domain architecture, Kazal-like spans 32–86 (QFRTPDCGHFDFPACPRNLNPVCGTDMNTYSNECTLCMKIREDGSHINIIKDEPC). 3 disulfides stabilise this stretch: Cys-38/Cys-68, Cys-46/Cys-65, and Cys-54/Cys-86.

As to expression, expressed in sperm (at protein level). Expressed in testis but not in ovary, brain, heart, kidney or lung. Within testis, expressed in epididymis and germ cells.

The protein resides in the secreted. It is found in the cytoplasmic vesicle. Its subcellular location is the secretory vesicle. The protein localises to the acrosome. Its function is as follows. As a strong inhibitor of acrosin, it is required for normal spermiogenesis. It probably hinders premature activation of proacrosin and other proteases, thus preventing the cascade of events leading to spermiogenesis defects. May be involved in the regulation of serine protease-dependent germ cell apoptosis. It also inhibits trypsin. The sequence is that of Serine protease inhibitor Kazal-type 2 (Spink2) from Mus musculus (Mouse).